A 155-amino-acid chain; its full sequence is 2-C-methyl-D-erythritol 2,4-cyclodiphosphate synthase (155 aa).

Residues Asp-8 and His-10 each coordinate a divalent metal cation. Residues 8 to 10 (DVH) and 34 to 35 (HS) each bind 4-CDP-2-C-methyl-D-erythritol 2-phosphate. His-42 lines the a divalent metal cation pocket. 4-CDP-2-C-methyl-D-erythritol 2-phosphate contacts are provided by residues 56-58 (DIG), 61-65 (FPDTD), 100-106 (AQAPKMA), 132-135 (TTTE), Phe-139, and Arg-142.

Belongs to the IspF family. As to quaternary structure, homotrimer. The cofactor is a divalent metal cation.

The catalysed reaction is 4-CDP-2-C-methyl-D-erythritol 2-phosphate = 2-C-methyl-D-erythritol 2,4-cyclic diphosphate + CMP. It functions in the pathway isoprenoid biosynthesis; isopentenyl diphosphate biosynthesis via DXP pathway; isopentenyl diphosphate from 1-deoxy-D-xylulose 5-phosphate: step 4/6. In terms of biological role, involved in the biosynthesis of isopentenyl diphosphate (IPP) and dimethylallyl diphosphate (DMAPP), two major building blocks of isoprenoid compounds. Catalyzes the conversion of 4-diphosphocytidyl-2-C-methyl-D-erythritol 2-phosphate (CDP-ME2P) to 2-C-methyl-D-erythritol 2,4-cyclodiphosphate (ME-CPP) with a corresponding release of cytidine 5-monophosphate (CMP). The chain is 2-C-methyl-D-erythritol 2,4-cyclodiphosphate synthase from Saccharophagus degradans (strain 2-40 / ATCC 43961 / DSM 17024).